Consider the following 689-residue polypeptide: Glycine--tRNA ligase beta subunit (689 aa).

The protein belongs to the class-II aminoacyl-tRNA synthetase family. Tetramer of two alpha and two beta subunits.

Its subcellular location is the cytoplasm. The catalysed reaction is tRNA(Gly) + glycine + ATP = glycyl-tRNA(Gly) + AMP + diphosphate. The chain is Glycine--tRNA ligase beta subunit from Photorhabdus laumondii subsp. laumondii (strain DSM 15139 / CIP 105565 / TT01) (Photorhabdus luminescens subsp. laumondii).